The sequence spans 160 residues: Transcriptional repressor NrdR (160 aa).

Residues cysteine 3 to cysteine 34 fold into a zinc finger. The 91-residue stretch at proline 49–glutamate 139 folds into the ATP-cone domain.

It belongs to the NrdR family. Zn(2+) serves as cofactor.

Its function is as follows. Negatively regulates transcription of bacterial ribonucleotide reductase nrd genes and operons by binding to NrdR-boxes. The protein is Transcriptional repressor NrdR of Bordetella avium (strain 197N).